The sequence spans 161 residues: DNA-binding protein inhibitor ID-4 (161 aa).

The 53-residue stretch at 52-104 folds into the bHLH domain; sequence AAEAAADEPALCLQCDMNDCYSRLRRLVPTIPPNKKVSKVEILPHVIDYILDL. Positions 116–161 are disordered; it reads RQPPPPAPPHHPAGTCPAAPPRTPLTALNTDPAGAVNKQGDSILCR. Residues 117 to 126 are compositionally biased toward pro residues; it reads QPPPPAPPHH.

Heterodimer with other HLH proteins.

The protein localises to the nucleus. Its function is as follows. Transcriptional regulator (lacking a basic DNA binding domain) which negatively regulates the basic helix-loop-helix (bHLH) transcription factors by forming heterodimers and inhibiting their DNA binding and transcriptional activity. Implicated in regulating a variety of cellular processes, including cellular growth, senescence, differentiation, apoptosis, angiogenesis, and neoplastic transformation. This chain is DNA-binding protein inhibitor ID-4 (ID4), found in Sus scrofa (Pig).